Reading from the N-terminus, the 333-residue chain is DNA-directed RNA polymerase subunit alpha (333 aa).

Positions 1–234 are alpha N-terminal domain (alpha-NTD); the sequence is MQSSVNEFLT…QQLAAFVDLK (234 aa). The alpha C-terminal domain (alpha-CTD) stretch occupies residues 248–333; sequence IDPILLRPVD…SLKKDDKATA (86 aa).

The protein belongs to the RNA polymerase alpha chain family. As to quaternary structure, homodimer. The RNAP catalytic core consists of 2 alpha, 1 beta, 1 beta' and 1 omega subunit. When a sigma factor is associated with the core the holoenzyme is formed, which can initiate transcription.

It catalyses the reaction RNA(n) + a ribonucleoside 5'-triphosphate = RNA(n+1) + diphosphate. Its function is as follows. DNA-dependent RNA polymerase catalyzes the transcription of DNA into RNA using the four ribonucleoside triphosphates as substrates. The chain is DNA-directed RNA polymerase subunit alpha from Pseudomonas putida (Arthrobacter siderocapsulatus).